The following is a 531-amino-acid chain: Arginine--tRNA ligase (531 aa).

The 'HIGH' region signature appears at 113 to 123; that stretch reads ANPTGPLHIGH.

This sequence belongs to the class-I aminoacyl-tRNA synthetase family. As to quaternary structure, monomer.

It is found in the cytoplasm. It carries out the reaction tRNA(Arg) + L-arginine + ATP = L-arginyl-tRNA(Arg) + AMP + diphosphate. In Campylobacter fetus subsp. fetus (strain 82-40), this protein is Arginine--tRNA ligase.